Consider the following 329-residue polypeptide: Diaminopimelate epimerase (329 aa).

Substrate contacts are provided by N14 and N73. C82 serves as the catalytic Proton donor. Residues 83–84 (GN), N170, N206, and 224–225 (ER) each bind substrate. C233 acts as the Proton acceptor in catalysis. 234 to 235 (GT) contributes to the substrate binding site.

Belongs to the diaminopimelate epimerase family. As to quaternary structure, homodimer.

The protein resides in the cytoplasm. The catalysed reaction is (2S,6S)-2,6-diaminopimelate = meso-2,6-diaminopimelate. The protein operates within amino-acid biosynthesis; L-lysine biosynthesis via DAP pathway; DL-2,6-diaminopimelate from LL-2,6-diaminopimelate: step 1/1. In terms of biological role, catalyzes the stereoinversion of LL-2,6-diaminopimelate (L,L-DAP) to meso-diaminopimelate (meso-DAP), a precursor of L-lysine and an essential component of the bacterial peptidoglycan. This Listeria monocytogenes serovar 1/2a (strain ATCC BAA-679 / EGD-e) protein is Diaminopimelate epimerase.